We begin with the raw amino-acid sequence, 323 residues long: L-lactate dehydrogenase (323 aa).

NAD(+) contacts are provided by residues valine 18, aspartate 39, arginine 44, tyrosine 69, and 83–84 (GA). Glutamine 86 and arginine 92 together coordinate substrate. Residues threonine 105, 122–124 (AAN), and serine 147 contribute to the NAD(+) site. Position 124–127 (124–127 (NPVD)) interacts with substrate. 152 to 155 (DTAR) provides a ligand contact to substrate. Catalysis depends on histidine 179, which acts as the Proton acceptor. The residue at position 223 (tyrosine 223) is a Phosphotyrosine. Threonine 232 lines the substrate pocket.

The protein belongs to the LDH/MDH superfamily. LDH family. Homotetramer.

Its subcellular location is the cytoplasm. The catalysed reaction is (S)-lactate + NAD(+) = pyruvate + NADH + H(+). The protein operates within fermentation; pyruvate fermentation to lactate; (S)-lactate from pyruvate: step 1/1. Catalyzes the conversion of lactate to pyruvate. This Pediococcus acidilactici protein is L-lactate dehydrogenase.